A 125-amino-acid chain; its full sequence is Protein MGF 360-9L (125 aa).

It belongs to the asfivirus MGF 360 family. As to quaternary structure, interacts with host STAT1; this interaction mediates STAT1 degradation through apoptosis. Interacts with host STAT2; this interaction mediates STAT2 degradation through the proteasome.

It is found in the host cytoplasm. Plays a role in virus cell tropism, and may be required for efficient virus replication in macrophages. In addition, inhibits IFN-beta-induced IFN-stimulated genes (ISGs) transcription. Mechanistically, degrades host STAT1 and STAT2 through apoptosis and ubiquitin-proteasome pathways respectively. This chain is Protein MGF 360-9L, found in African swine fever virus (strain Badajoz 1971 Vero-adapted) (Ba71V).